A 383-amino-acid polypeptide reads, in one-letter code: Deoxyhypusine synthase-like protein (383 aa).

The protein belongs to the deoxyhypusine synthase family.

In Nostoc sp. (strain PCC 7120 / SAG 25.82 / UTEX 2576), this protein is Deoxyhypusine synthase-like protein.